The following is a 580-amino-acid chain: E3 ubiquitin-protein ligase TRIM45 (580 aa).

The segment at 29-98 (CPLCMGLFKA…QIGILCPVCD (70 aa)) adopts an RING-type zinc-finger fold. B box-type zinc fingers lie at residues 130-176 (GQGL…MVDL) and 186-227 (GKPI…CDFT). Residues cysteine 135, cysteine 138, cysteine 158, histidine 162, cysteine 191, histidine 194, cysteine 214, and histidine 219 each coordinate Zn(2+). Residues 281–335 (SEGYIKAIEEHRDKLLKQLEDIRVQKENSLQLQKAQLEQLLADMRTGVEFTEHLL) are a coiled coil. The Filamin repeat unit spans residues 394 to 497 (TKEVDPAKCV…VQGSPFTVTV (104 aa)).

Belongs to the TRIM/RBCC family.

The protein resides in the cytoplasm. Its subcellular location is the nucleus. It catalyses the reaction S-ubiquitinyl-[E2 ubiquitin-conjugating enzyme]-L-cysteine + [acceptor protein]-L-lysine = [E2 ubiquitin-conjugating enzyme]-L-cysteine + N(6)-ubiquitinyl-[acceptor protein]-L-lysine.. Its function is as follows. E3 ubiquitin-protein ligase that plays a role in the regulation of inflammatory response. Mechanistically, mediates the 'Lys-48'-linked polyubiquitination of TAB2, a regulatory protein of the kinase TAK1, leading to its degradation via the proteasomal pathway and inhibition of the TLR-mediated inflammatory immune response. May act as a transcriptional repressor in mitogen-activated protein kinase signaling pathway. The chain is E3 ubiquitin-protein ligase TRIM45 (TRIM45) from Bos taurus (Bovine).